Reading from the N-terminus, the 697-residue chain is MSNSQPPRSSSSSQERAEELRRLLNRAAHAYYVLDAPDMEDPVYDQLYRELQDLEHQDSTLVSADSPTQRVGGRLADGFRSVSHRISLFSLDNAFNRDELHGWYSRLLKALDRTPAAGSPPPTLPMVGELKIDGNALALSYENGVLVRAATRGDGEQGEEITANVRTISSIPLRLHLEPVPAWVEVRGEAFIPDATFHAINNERLSRDESLFANPRNACAGTLRQLDPSVVAARRLDFFAYTLHLPDEWQERRPLTQWDALQWLGDAGFKVNPNAGLLPDLQAVEQFFDTWDTERRQLDYATDGVVVKLNDLRLQDAAGFTQKAPRWAIALKYPAEEAPSKILRISYQVGRTGVITPVAEFEPVGLAGTSVSRASLHNADRLVELDLHDGDTIVVRKAGEIIPEVVRVLPELRPALAQPLEITKTCPACGSTLVRESNESATRCINSSCPAILRGALRHWVSKGAMDIDGLGSKLIEQLVDRGLVQSIADLYRLDMALLGSLERMGSKSAENLIQALNASRSQGWAKQLYGLGIHHVGDVNAKAITTAFPNADSLNQAACHAPESITAIFGVGKEIAQSLQQWFSSPANQRLLDELRSLGFSLSLNEEEQSRATTAAANHHLTGSTFVLTGTLPTLTRSQAKEQIEACGGKVSGSVSKKTSYLVAGEEAGSKLTKAQELGVSILDEEALQNMLRGST.

NAD(+) is bound by residues Asp41–Asp45, Ser90–Leu91, and Glu129. Catalysis depends on Lys131, which acts as the N6-AMP-lysine intermediate. Residues Arg152, Glu189, Lys308, and Lys332 each coordinate NAD(+). Residues Cys426, Cys429, Cys444, and Cys449 each coordinate Zn(2+). The region spanning Ala617–Thr697 is the BRCT domain.

It belongs to the NAD-dependent DNA ligase family. LigA subfamily. It depends on Mg(2+) as a cofactor. The cofactor is Mn(2+).

It catalyses the reaction NAD(+) + (deoxyribonucleotide)n-3'-hydroxyl + 5'-phospho-(deoxyribonucleotide)m = (deoxyribonucleotide)n+m + AMP + beta-nicotinamide D-nucleotide.. Functionally, DNA ligase that catalyzes the formation of phosphodiester linkages between 5'-phosphoryl and 3'-hydroxyl groups in double-stranded DNA using NAD as a coenzyme and as the energy source for the reaction. It is essential for DNA replication and repair of damaged DNA. This is DNA ligase from Synechococcus sp. (strain CC9311).